The following is a 487-amino-acid chain: UDP-N-acetylmuramate--L-alanine ligase (487 aa).

124–130 (GTHGKTT) contacts ATP.

The protein belongs to the MurCDEF family.

The protein localises to the cytoplasm. The enzyme catalyses UDP-N-acetyl-alpha-D-muramate + L-alanine + ATP = UDP-N-acetyl-alpha-D-muramoyl-L-alanine + ADP + phosphate + H(+). It participates in cell wall biogenesis; peptidoglycan biosynthesis. Cell wall formation. In Acaryochloris marina (strain MBIC 11017), this protein is UDP-N-acetylmuramate--L-alanine ligase.